Reading from the N-terminus, the 161-residue chain is Putative allophycocyanin subunit alpha 2 (161 aa).

The residue at position 71 (asparagine 71) is an N4-methylasparagine. Cysteine 81 contacts (2R,3E)-phycocyanobilin.

Belongs to the phycobiliprotein family. As to quaternary structure, heterohexamer of two alpha chains, one alpha-B chain and three beta chains. Post-translationally, contains one covalently linked phycocyanobilin chromophore. The chromophore is added by phycocyanobilin lyase CpcS 1.

It is found in the cellular thylakoid membrane. Light-harvesting photosynthetic bile pigment-protein from the phycobiliprotein complex. Allophycocyanin has a maximum absorption at approximately 650 to 653 nanometers. This is Putative allophycocyanin subunit alpha 2 (apcA2) from Nostoc sp. (strain PCC 7120 / SAG 25.82 / UTEX 2576).